A 232-amino-acid polypeptide reads, in one-letter code: 2-C-methyl-D-erythritol 4-phosphate cytidylyltransferase (232 aa).

It belongs to the IspD/TarI cytidylyltransferase family. IspD subfamily.

It catalyses the reaction 2-C-methyl-D-erythritol 4-phosphate + CTP + H(+) = 4-CDP-2-C-methyl-D-erythritol + diphosphate. It participates in isoprenoid biosynthesis; isopentenyl diphosphate biosynthesis via DXP pathway; isopentenyl diphosphate from 1-deoxy-D-xylulose 5-phosphate: step 2/6. Catalyzes the formation of 4-diphosphocytidyl-2-C-methyl-D-erythritol from CTP and 2-C-methyl-D-erythritol 4-phosphate (MEP). The chain is 2-C-methyl-D-erythritol 4-phosphate cytidylyltransferase from Neorickettsia sennetsu (strain ATCC VR-367 / Miyayama) (Ehrlichia sennetsu).